A 292-amino-acid polypeptide reads, in one-letter code: 4-hydroxy-tetrahydrodipicolinate synthase (292 aa).

Threonine 45 is a binding site for pyruvate. Tyrosine 133 acts as the Proton donor/acceptor in catalysis. The active-site Schiff-base intermediate with substrate is lysine 161. A pyruvate-binding site is contributed by isoleucine 203.

It belongs to the DapA family. In terms of assembly, homotetramer; dimer of dimers.

The protein localises to the cytoplasm. The catalysed reaction is L-aspartate 4-semialdehyde + pyruvate = (2S,4S)-4-hydroxy-2,3,4,5-tetrahydrodipicolinate + H2O + H(+). It functions in the pathway amino-acid biosynthesis; L-lysine biosynthesis via DAP pathway; (S)-tetrahydrodipicolinate from L-aspartate: step 3/4. Functionally, catalyzes the condensation of (S)-aspartate-beta-semialdehyde [(S)-ASA] and pyruvate to 4-hydroxy-tetrahydrodipicolinate (HTPA). The sequence is that of 4-hydroxy-tetrahydrodipicolinate synthase from Salmonella arizonae (strain ATCC BAA-731 / CDC346-86 / RSK2980).